Consider the following 642-residue polypeptide: Threonine--tRNA ligase (642 aa).

The 61-residue stretch at 1-61 folds into the TGS domain; that stretch reads MPVITLPDGS…SEDANLVIFT (61 aa). Residues 243–534 form a catalytic region; the sequence is DHRKLAKKFD…LIEHYEGSFP (292 aa). Cys-334, His-385, and His-511 together coordinate Zn(2+).

It belongs to the class-II aminoacyl-tRNA synthetase family. Homodimer. Requires Zn(2+) as cofactor.

Its subcellular location is the cytoplasm. The enzyme catalyses tRNA(Thr) + L-threonine + ATP = L-threonyl-tRNA(Thr) + AMP + diphosphate + H(+). Catalyzes the attachment of threonine to tRNA(Thr) in a two-step reaction: L-threonine is first activated by ATP to form Thr-AMP and then transferred to the acceptor end of tRNA(Thr). Also edits incorrectly charged L-seryl-tRNA(Thr). In Cellvibrio japonicus (strain Ueda107) (Pseudomonas fluorescens subsp. cellulosa), this protein is Threonine--tRNA ligase.